The chain runs to 167 residues: Ribosome maturation factor RimM (167 aa).

The PRC barrel domain occupies aspartate 92–leucine 166.

Belongs to the RimM family. Binds ribosomal protein uS19.

The protein resides in the cytoplasm. In terms of biological role, an accessory protein needed during the final step in the assembly of 30S ribosomal subunit, possibly for assembly of the head region. Essential for efficient processing of 16S rRNA. May be needed both before and after RbfA during the maturation of 16S rRNA. It has affinity for free ribosomal 30S subunits but not for 70S ribosomes. The protein is Ribosome maturation factor RimM of Lactobacillus delbrueckii subsp. bulgaricus (strain ATCC 11842 / DSM 20081 / BCRC 10696 / JCM 1002 / NBRC 13953 / NCIMB 11778 / NCTC 12712 / WDCM 00102 / Lb 14).